A 465-amino-acid chain; its full sequence is Probable Xaa-Pro aminopeptidase pepP (465 aa).

Mn(2+) contacts are provided by D261, D272, E395, and E435.

It belongs to the peptidase M24B family. The cofactor is Mn(2+).

The enzyme catalyses Release of any N-terminal amino acid, including proline, that is linked to proline, even from a dipeptide or tripeptide.. Catalyzes the removal of a penultimate prolyl residue from the N-termini of peptides. The sequence is that of Probable Xaa-Pro aminopeptidase pepP (pepP) from Talaromyces marneffei (strain ATCC 18224 / CBS 334.59 / QM 7333) (Penicillium marneffei).